The primary structure comprises 820 residues: Leucine-rich repeat and guanylate kinase domain-containing protein (820 aa).

The segment covering 72 to 83 (EAEAEQEEKQQE) has biased composition (basic and acidic residues). Residues 72–96 (EAEAEQEEKQQEDGESEESEESEMQ) form a disordered region. Positions 84 to 94 (DGESEESEESE) are enriched in acidic residues. LRR repeat units follow at residues 129–149 (YLNLNLSHCELVDISILCGYV), 150–171 (HLQKLNLSGNRIEDLSCVSCMP), 172–193 (YLLELNASQNKLTTFFNFKPPQ), 194–215 (NLKKVDFSSNLISEMYDLSAYH), 216–237 (TLTQLILDNNEIEEITGLENCI), 238–259 (SLTHLSLAGNKITTIKGLGTLP), 260–280 (IKVLSLSNNMIETITGLEELK), 281–302 (ALQNLDLSHNQISSLQGLENHD), and 303–324 (LLEVINLEDNKIKELSEIEYIE). Residues 337 to 375 (NPIQTKPEYWFFVIYMLLRLTELDQQKIKVEEKVFAVNK) enclose the LRRCT domain. The Guanylate kinase-like domain occupies 414–597 (YPMLILTGPA…AYQKLSELIR (184 aa)). 421–428 (GPAACGKR) serves as a coordination point for ATP. The interval 800–820 (TIMDPGSNTKPTLPPIPHGRR) is disordered. The span at 811–820 (TLPPIPHGRR) shows a compositional bias: pro residues.

Interacts (via guanylate kinase-like domain) with RIMBP3 (via coiled-coil region). Interacts (via guanylate kinase-like domain) with HOOK2. Interacts (via LRRCT domain) with KLC3. Interacts with HOOK1 and HOOK3. As to expression, highly expressed in the testis. During spermatid development is initially localized to a supra-nuclear region of round spermatids, and is particularly evident at the leading edge of the developing acrosome and acroplaxome. As maturation proceeded and nuclear elongation initiated, LRGUK moves distally to ultimately reside on the microtubules of the manchette. LRGUK is also evident in the sperm basal body and the sperm tail.

It localises to the cytoplasmic vesicle. It is found in the secretory vesicle. Its subcellular location is the acrosome. The protein resides in the cytoplasm. The protein localises to the cytoskeleton. It localises to the cilium basal body. Involved in multiple aspects of sperm assembly including acrosome attachment, shaping of the sperm head and in the early aspects of axoneme development. Not essential for primary cilium biogenesis. In Mus musculus (Mouse), this protein is Leucine-rich repeat and guanylate kinase domain-containing protein (Lrguk).